Here is a 625-residue protein sequence, read N- to C-terminus: Probable potassium transport system protein Kup (625 aa).

The next 12 membrane-spanning stretches (helical) occupy residues 10–30, 50–70, 102–122, 142–162, 172–192, 215–235, 250–270, 284–304, 340–360, 369–389, 397–417, and 422–442; these read LAAL…TSPL, LLGV…LKYV, YFPL…DSVI, FDPY…SVQA, FGPI…VNII, FLAF…EALY, WFLV…ALLL, LGAW…IIAS, IYIP…VVGF, AYGI…FFVI, LLLC…LFSA, and LFHG…LMLT.

Belongs to the HAK/KUP transporter (TC 2.A.72) family.

The protein localises to the cell inner membrane. The enzyme catalyses K(+)(in) + H(+)(in) = K(+)(out) + H(+)(out). Functionally, transport of potassium into the cell. Likely operates as a K(+):H(+) symporter. This Janthinobacterium sp. (strain Marseille) (Minibacterium massiliensis) protein is Probable potassium transport system protein Kup.